Reading from the N-terminus, the 257-residue chain is UPF0758 protein Bcenmc03_2526 (257 aa).

The tract at residues 1–53 (MLSPCPILPSAECRDTADTPADPPGRVIPINRRRRRPGDWRPERPRERLLERG) is disordered. Residues 37–51 (PGDWRPERPRERLLE) are compositionally biased toward basic and acidic residues. The region spanning 135–257 (QIDSPGAVED…TFSFARAGWL (123 aa)) is the MPN domain. The Zn(2+) site is built by His206, His208, and Asp219. Residues 206-219 (HNHPSGAVQPSAED) carry the JAMM motif motif.

Belongs to the UPF0758 family.

The sequence is that of UPF0758 protein Bcenmc03_2526 from Burkholderia orbicola (strain MC0-3).